Here is a 420-residue protein sequence, read N- to C-terminus: Probable pectate lyase C (420 aa).

The N-terminal stretch at 1–20 (MKLSEPLLVSLAAFSQAVTA) is a signal peptide. N-linked (GlcNAc...) asparagine glycans are attached at residues Asn49, Asn165, and Asn202. Arg205 is a catalytic residue. The region spanning 262-297 (NANFHGYVQNNYYDPDKDGQLDGFELGVSSSNYGGM) is the EF-hand domain. 5 residues coordinate Ca(2+): Asp275, Asp277, Asp279, Gln281, and Glu286. The segment at 358-396 (TMGGPGTLNGGTPAKDTDGDGIPDEAEKQLGTDPNTNDS) is disordered. Asn394 carries an N-linked (GlcNAc...) asparagine glycan.

Belongs to the polysaccharide lyase 1 family. Ca(2+) serves as cofactor.

The protein resides in the secreted. It catalyses the reaction Eliminative cleavage of (1-&gt;4)-alpha-D-galacturonan to give oligosaccharides with 4-deoxy-alpha-D-galact-4-enuronosyl groups at their non-reducing ends.. Its function is as follows. Pectinolytic enzyme consist of four classes of enzymes: pectin lyase, polygalacturonase, pectin methylesterase and rhamnogalacturonase. Among pectinolytic enzymes, pectin lyase is the most important in depolymerization of pectin, since it cleaves internal glycosidic bonds of highly methylated pectins. Favors pectate, the anion, over pectin, the methyl ester. In Aspergillus fumigatus (strain ATCC MYA-4609 / CBS 101355 / FGSC A1100 / Af293) (Neosartorya fumigata), this protein is Probable pectate lyase C (plyC).